Here is a 547-residue protein sequence, read N- to C-terminus: 2-succinyl-5-enolpyruvyl-6-hydroxy-3-cyclohexene-1-carboxylate synthase (547 aa).

Belongs to the TPP enzyme family. MenD subfamily. Homodimer. Mg(2+) serves as cofactor. The cofactor is Mn(2+). It depends on thiamine diphosphate as a cofactor.

It catalyses the reaction isochorismate + 2-oxoglutarate + H(+) = 5-enolpyruvoyl-6-hydroxy-2-succinyl-cyclohex-3-ene-1-carboxylate + CO2. It participates in quinol/quinone metabolism; 1,4-dihydroxy-2-naphthoate biosynthesis; 1,4-dihydroxy-2-naphthoate from chorismate: step 2/7. Its pathway is quinol/quinone metabolism; menaquinone biosynthesis. Functionally, catalyzes the thiamine diphosphate-dependent decarboxylation of 2-oxoglutarate and the subsequent addition of the resulting succinic semialdehyde-thiamine pyrophosphate anion to isochorismate to yield 2-succinyl-5-enolpyruvyl-6-hydroxy-3-cyclohexene-1-carboxylate (SEPHCHC). The polypeptide is 2-succinyl-5-enolpyruvyl-6-hydroxy-3-cyclohexene-1-carboxylate synthase (Mycobacterium sp. (strain KMS)).